A 77-amino-acid chain; its full sequence is UPF0291 protein Bsph_1689 (77 aa).

The protein belongs to the UPF0291 family.

It is found in the cytoplasm. The sequence is that of UPF0291 protein Bsph_1689 from Lysinibacillus sphaericus (strain C3-41).